The sequence spans 296 residues: NAD kinase (296 aa).

The active-site Proton acceptor is Asp78. NAD(+)-binding positions include 78–79, 152–153, Arg180, Asp182, and Gln251; these read DG and ND.

This sequence belongs to the NAD kinase family. Requires a divalent metal cation as cofactor.

The protein resides in the cytoplasm. The catalysed reaction is NAD(+) + ATP = ADP + NADP(+) + H(+). In terms of biological role, involved in the regulation of the intracellular balance of NAD and NADP, and is a key enzyme in the biosynthesis of NADP. Catalyzes specifically the phosphorylation on 2'-hydroxyl of the adenosine moiety of NAD to yield NADP. This chain is NAD kinase, found in Neisseria meningitidis serogroup C (strain 053442).